The primary structure comprises 148 residues: Small ribosomal subunit protein eS19 (148 aa).

Basic residues predominate over residues 79–90 (HGSTKNRGSRPA). Disordered regions lie at residues 79–98 (HGST…ASGA) and 116–148 (DEEK…EDDE). Basic and acidic residues predominate over residues 130–140 (RDLDRIAKTTV).

This sequence belongs to the eukaryotic ribosomal protein eS19 family.

The protein is Small ribosomal subunit protein eS19 (rps19) of Emericella nidulans (strain FGSC A4 / ATCC 38163 / CBS 112.46 / NRRL 194 / M139) (Aspergillus nidulans).